Here is a 471-residue protein sequence, read N- to C-terminus: Glutamate--tRNA ligase (471 aa).

Positions 9–19 match the 'HIGH' region motif; it reads PSPTGFLHVGG. Residues Cys-98, Cys-100, Cys-125, and Asp-127 each contribute to the Zn(2+) site. The 'KMSKS' region motif lies at 237–241; that stretch reads KLSKR. Residue Lys-240 participates in ATP binding.

It belongs to the class-I aminoacyl-tRNA synthetase family. Glutamate--tRNA ligase type 1 subfamily. As to quaternary structure, monomer. The cofactor is Zn(2+).

It is found in the cytoplasm. It catalyses the reaction tRNA(Glu) + L-glutamate + ATP = L-glutamyl-tRNA(Glu) + AMP + diphosphate. Its function is as follows. Catalyzes the attachment of glutamate to tRNA(Glu) in a two-step reaction: glutamate is first activated by ATP to form Glu-AMP and then transferred to the acceptor end of tRNA(Glu). This chain is Glutamate--tRNA ligase, found in Aeromonas hydrophila subsp. hydrophila (strain ATCC 7966 / DSM 30187 / BCRC 13018 / CCUG 14551 / JCM 1027 / KCTC 2358 / NCIMB 9240 / NCTC 8049).